The sequence spans 336 residues: MNNIQLAHGSGGQAMQQLINSLFMEAFANPWLAEQEDQARLDLAQLVAEGDRLAFSTDSYVIDPLFFPGGNIGKLAICGTANDVAVSGAIPRYLSCGFILEEGLPMETLKAVVTSMAETARAAGIAIVTGDTKVVQRGAVDKLFINTAGMGAIPANIHWGAQTLTAGDVLLVSGTLGDHGATILNLREQLGLDGELVSDCAVLTPLIQTLRDIPGVKALRDATRGGVNAVVHEFAAACGCGIELSEAALPVKPAVRGVCELLGLDALNFANEGKLVIAVERNAAEQVLAALHSHPLGKDAALIGEVVERKGVRLAGLYGVKRTLDLPHAEPLPRIC.

Cys336 bears the S-carbamoylcysteine; by HypF; alternate mark. Cys336 is modified (S-cyanocysteine; by autocatalysis; alternate).

The protein belongs to the HypE family. In terms of assembly, homodimer. Forms a complex with HypF. Also forms a complex with HypC, or HybG, and HypD. In terms of processing, modified by HypF, which adds a carboxamido group to the thiolate of the C-terminal cysteine, yielding a protein-S-carboxamide. The carboxamido group is then dehydrated by HypE itself to yield a protein-thiocyanate.

It carries out the reaction C-terminal S-carboxamide-L-cysteinyl-[HypE protein] + ATP = C-terminal S-cyanate-L-cysteinyl-[HypE protein] + ADP + phosphate + H(+). It functions in the pathway protein modification; [NiFe] hydrogenase maturation. In terms of biological role, involved in the maturation of [NiFe] hydrogenases. Along with HypF, it catalyzes the synthesis of the CN ligands of the active site iron of [NiFe]-hydrogenases. HypE catalyzes the ATP-dependent dehydration of the carboxamido group attached to its C-terminal cysteine to a cyano group. The cyano group is then transferred from HypE to the HypC-HypD complex or the HybG-HypD complex. The protein is Carbamoyl dehydratase HypE of Escherichia coli (strain K12).